The sequence spans 344 residues: UDP-glycosyltransferase 73C4 (344 aa).

Residues Ser-145, 202 to 203, 220 to 228, and 242 to 245 contribute to the UDP-alpha-D-glucose site; these read WA, HCGWNSSLE, and FAEQ.

It belongs to the UDP-glycosyltransferase family. As to expression, expressed in flowers and fruits.

It is found in the cytoplasm. It localises to the nucleus. Its function is as follows. Probable glucosyltransferase that cannot glycosylate abscisic acid (ABA) and auxin (IAA). In Solanum lycopersicum (Tomato), this protein is UDP-glycosyltransferase 73C4.